The primary structure comprises 105 residues: Urease subunit beta (105 aa).

This sequence belongs to the urease beta subunit family. As to quaternary structure, heterotrimer of UreA (gamma), UreB (beta) and UreC (alpha) subunits. Three heterotrimers associate to form the active enzyme.

The protein localises to the cytoplasm. The enzyme catalyses urea + 2 H2O + H(+) = hydrogencarbonate + 2 NH4(+). The protein operates within nitrogen metabolism; urea degradation; CO(2) and NH(3) from urea (urease route): step 1/1. This is Urease subunit beta from Pseudomonas putida (strain GB-1).